The following is a 203-amino-acid chain: MAAEAAAALEGSEPVDLAKHPSGIIPTLQNIVSTVNLDCKLDLKAIALQARNAEYNPKRFAAVIMRIREPKTTALIFASGKMVCTGAKSEQQSKLAARKYARIIQKLGFPAKFKDFKIQNIVGSCDVKFPIRLEGLAYSHGAFSSYEPELFPGLIYRMKQPKIVLLIFVSGKIVLTGAKVRDETYTAFENIYPVLTEFRKVQQ.

Tandem repeats lie at residues 28-104 (LQNI…ARII) and 118-195 (IQNI…YPVL).

The protein belongs to the TBP family. Belongs to the TFIID complex together with the TBP-associated factors (TAFs). Binds DNA as monomer. Interacts with RF2A and TFIIB. Interacts with CWZF7.

It localises to the nucleus. Functionally, general transcription factor that functions at the core of the DNA-binding multiprotein factor TFIID. Binding of TFIID to the TATA box is the initial transcriptional step of the pre-initiation complex (PIC), playing a role in the activation of eukaryotic genes transcribed by RNA polymerase II. This is TATA-binding protein 2 (TBP2) from Oryza sativa subsp. japonica (Rice).